The following is a 141-amino-acid chain: ATP synthase epsilon chain (141 aa).

This sequence belongs to the ATPase epsilon chain family. As to quaternary structure, F-type ATPases have 2 components, CF(1) - the catalytic core - and CF(0) - the membrane proton channel. CF(1) has five subunits: alpha(3), beta(3), gamma(1), delta(1), epsilon(1). CF(0) has three main subunits: a, b and c.

The protein localises to the cell inner membrane. Its function is as follows. Produces ATP from ADP in the presence of a proton gradient across the membrane. The chain is ATP synthase epsilon chain from Burkholderia thailandensis (strain ATCC 700388 / DSM 13276 / CCUG 48851 / CIP 106301 / E264).